Reading from the N-terminus, the 539-residue chain is MAKQIAFDEQARRALERGVNQLADAVKVTLGPRGRHVVLDKQFGGPQVTNDGVTIAREIELEDPYENLGAQLAKNVATKTNDVAGDGTTTATVLAQAMVREGLRNLAAGANPTALGRGIQAATDAVVDALKAKATPVKGRDNIAQIATVSSRDESIGALVGEAMERVGEDGVISIEESSTLATELEITEGVQFDKGFVSPYFVTDSERQEAVLEDAQILLHREKISSIQDLLPLLEKIAQSGKPLLILAEDVEGEALSTLVVNAIRKTFKVVAVKAPYFGDRRKAFLDDLAAVTGAQVIAPEVGLKLSEAGPEVLGSARRITVTKDTTTIVDGRGPQDDVKARAEQIRKEIEVSDSDWDREKLQERLAKLAGGVAVIKVGAATETELKERKSRIEDAVAASKAAAEEGSVPGGGSSLIHAAKELNGDLGLSGDEATGVRLVRTALEAPLFWIASNAGQEGAVVVSKVRDLDWGQGYNAATLTFGDLVQPGIVDPLKVTRSAVANAASIARMVLTTESAVVDKPEEEDSAAAGHGHGHSH.

ATP is bound by residues Thr-29–Pro-32, Asp-86–Thr-90, Gly-413, Asn-477–Ala-479, and Asp-493. Residues Val-519–His-539 form a disordered region.

It belongs to the chaperonin (HSP60) family. In terms of assembly, forms a cylinder of 14 subunits composed of two heptameric rings stacked back-to-back. Interacts with the co-chaperonin GroES.

It is found in the cytoplasm. It catalyses the reaction ATP + H2O + a folded polypeptide = ADP + phosphate + an unfolded polypeptide.. In terms of biological role, together with its co-chaperonin GroES, plays an essential role in assisting protein folding. The GroEL-GroES system forms a nano-cage that allows encapsulation of the non-native substrate proteins and provides a physical environment optimized to promote and accelerate protein folding. This chain is Chaperonin GroEL 2, found in Saccharopolyspora erythraea (strain ATCC 11635 / DSM 40517 / JCM 4748 / NBRC 13426 / NCIMB 8594 / NRRL 2338).